A 252-amino-acid chain; its full sequence is Glucosamine-6-phosphate deaminase (252 aa).

Residue Asp67 is the Proton acceptor; for enolization step of the active site. The active-site For ring-opening step is the Asn137. The active-site Proton acceptor; for ring-opening step is the His139. Catalysis depends on Glu144, which acts as the For ring-opening step.

This sequence belongs to the glucosamine/galactosamine-6-phosphate isomerase family. NagB subfamily.

It carries out the reaction alpha-D-glucosamine 6-phosphate + H2O = beta-D-fructose 6-phosphate + NH4(+). It participates in amino-sugar metabolism; N-acetylneuraminate degradation; D-fructose 6-phosphate from N-acetylneuraminate: step 5/5. Catalyzes the reversible isomerization-deamination of glucosamine 6-phosphate (GlcN6P) to form fructose 6-phosphate (Fru6P) and ammonium ion. This is Glucosamine-6-phosphate deaminase from Staphylococcus aureus (strain MRSA252).